A 1017-amino-acid polypeptide reads, in one-letter code: MPVMKGLLAPQNTFLDTIATRFDGTHSNFLLANAQGTRGFPIVYCSDGFCELTGYGRTEVMQKTCSCRFLYGPETSEPALQRLHKALEGHQEHRAEICFYRKDGSAFWCLLDMMPIKNEMGEVVLFLFSFKDITQSGSPGLGPQGGRGDSNHENSLGRRGATWKFRSARRRSRTVLHRLTGHFGRRGQGGMKANNNVFEPKPSVPEYKVASVGGSRCLLLHYSVSKAIWDGLILLATFYVAVTVPYNVCFSGDDDTPITSRHTLVSDIAVEMLFILDIILNFRTTYVSQSGQVISAPRSIGLHYLATWFFIDLIAALPFDLLYIFNITVTSLVHLLKTVRLLRLLRLLQKLERYSQCSAVVLTLLMSVFALLAHWMACIWYVIGRREMEANDPLLWDIGWLHELGKRLEVPYVNGSVGGPSRRSAYIAALYFTLSSLTSVGFGNVCANTDAEKIFSICTMLIGALMHAVVFGNVTAIIQRMYSRRSLYHSRMKDLKDFIRVHRLPRPLKQRMLEYFQTTWAVNSGIDANELLRDFPDELRADIAMHLNREILQLPLFGAASRGCLRALSLHIKTSFCAPGEYLLRRGDALQAHYYVCSGSLEVLRDNMVLAILGKGDLIGADIPEPGQEPGLGADPNFVLKTSADVKALTYCGLQQLSSRGLAEVLRLYPEYGAAFRAGLPRDLTFNLRQGSDTSGLSRFSRSPRLSQPRSESLGSSSDKTLPSITEAESGAEPGGGPRPRRPLLLPNLSPARPRGSLVSLLGEELPPFSALVSSPSLSPSLSPALAGQGHSASPHGPPRCSAAWKPPQLLIPPLGTFGPPDLSPRIVDGIEDSGSTAEAPSFRFSRRPELPRPRSQAPPTGTRPSPELASEAEEVKEKVCRLNQEISRLNQEVSQLSRELRHIMGLLQARLGPPGHPAGSAWTPDPPCPQLRPPCLSPCASRPPPSLQDTTLAEVHCPASVGTMETGTALLDLRPSILPPYPSEPDPLGPSPVPEASPPTPSLLRHSFQSRSDTFH.

Residues 1–228 (MPVMKGLLAP…LLHYSVSKAI (228 aa)) lie on the Cytoplasmic side of the membrane. Residues 14 to 90 (FLDTIATRFD…QRLHKALEGH (77 aa)) form the PAS domain. One can recognise a PAC domain in the interval 93 to 145 (HRAEICFYRKDGSAFWCLLDMMPIKNEMGEVVLFLFSFKDITQSGSPGLGPQG). Positions 138 to 157 (SPGLGPQGGRGDSNHENSLG) are disordered. Residues 139–148 (PGLGPQGGRG) are compositionally biased toward gly residues. A helical transmembrane segment spans residues 229–249 (WDGLILLATFYVAVTVPYNVC). The Extracellular portion of the chain corresponds to 250 to 259 (FSGDDDTPIT). A helical membrane pass occupies residues 260-280 (SRHTLVSDIAVEMLFILDIIL). Topologically, residues 281-302 (NFRTTYVSQSGQVISAPRSIGL) are cytoplasmic. A helical transmembrane segment spans residues 303 to 323 (HYLATWFFIDLIAALPFDLLY). Residues 324-332 (IFNITVTSL) lie on the Extracellular side of the membrane. Asn326 carries N-linked (GlcNAc...) asparagine glycosylation. The helical; Voltage-sensor transmembrane segment at 333 to 353 (VHLLKTVRLLRLLRLLQKLER) threads the bilayer. The Cytoplasmic portion of the chain corresponds to 354–361 (YSQCSAVV). Residues 362–382 (LTLLMSVFALLAHWMACIWYV) form a helical membrane-spanning segment. Over 383–427 (IGRREMEANDPLLWDIGWLHELGKRLEVPYVNGSVGGPSRRSAYI) the chain is Extracellular. A glycan (N-linked (GlcNAc...) asparagine) is linked at Asn414. Residues 428–448 (AALYFTLSSLTSVGFGNVCAN) constitute an intramembrane region (pore-forming). A Selectivity filter motif is present at residues 439 to 444 (SVGFGN). Residues 449-482 (TDAEKIFSICTMLIGALMHAVVFGNVTAIIQRMY) are Extracellular-facing. Asn473 is a glycosylation site (N-linked (GlcNAc...) asparagine). A helical membrane pass occupies residues 483–503 (SRRSLYHSRMKDLKDFIRVHR). At 504-1017 (LPRPLKQRML…SFQSRSDTFH (514 aa)) the chain is on the cytoplasmic side. The tract at residues 556–620 (LFGAASRGCL…AILGKGDLIG (65 aa)) is cNMP-binding domain. Residues 691–724 (GSDTSGLSRFSRSPRLSQPRSESLGSSSDKTLPS) are compositionally biased toward polar residues. Disordered regions lie at residues 691 to 749 (GSDT…LPNL), 772 to 803 (LVSSPSLSPSLSPALAGQGHSASPHGPPRCSA), 821 to 875 (PDLS…EAEE), and 971 to 1017 (LLDL…DTFH). Over residues 772–787 (LVSSPSLSPSLSPALA) the composition is skewed to low complexity. A compositionally biased stretch (pro residues) spans 978-1002 (ILPPYPSEPDPLGPSPVPEASPPTP). Residues 1008-1017 (SFQSRSDTFH) show a composition bias toward polar residues.

The protein belongs to the potassium channel family. H (Eag) (TC 1.A.1.20) subfamily. Kv12.3/KCNH4 sub-subfamily. In terms of assembly, the potassium channel is probably composed of a homo- or heterotetrameric complex of pore-forming alpha subunits that can associate with modulating beta subunits. In terms of tissue distribution, detected only in brain, in particular in the telencephalon. Detected in putamen and caudate nucleus, and at lower levels in cerebral cortex, occipital and hippocampus.

It localises to the membrane. The enzyme catalyses K(+)(in) = K(+)(out). In terms of biological role, pore-forming (alpha) subunit of a voltage-gated delayed rectifier. Activates at more negative voltages, exhibits fast prepulse-independent activation kinetics and deactivates much more slowly, but shows no inactivation. This is Voltage-gated delayed rectifier potassium channel KCNH4 from Homo sapiens (Human).